The sequence spans 188 residues: NADH-quinone oxidoreductase subunit B (188 aa).

C67, C68, C132, and C162 together coordinate [4Fe-4S] cluster.

The protein belongs to the complex I 20 kDa subunit family. In terms of assembly, NDH-1 is composed of 14 different subunits. Subunits NuoB, C, D, E, F, and G constitute the peripheral sector of the complex. [4Fe-4S] cluster serves as cofactor.

It is found in the cell inner membrane. The catalysed reaction is a quinone + NADH + 5 H(+)(in) = a quinol + NAD(+) + 4 H(+)(out). NDH-1 shuttles electrons from NADH, via FMN and iron-sulfur (Fe-S) centers, to quinones in the respiratory chain. Couples the redox reaction to proton translocation (for every two electrons transferred, four hydrogen ions are translocated across the cytoplasmic membrane), and thus conserves the redox energy in a proton gradient. The sequence is that of NADH-quinone oxidoreductase subunit B from Maricaulis maris (strain MCS10) (Caulobacter maris).